The chain runs to 113 residues: Class I hydrophobin fvh1 (113 aa).

Positions 1–20 (MVSFRAFTVAASLFATLAAA) are cleaved as a signal peptide. Intrachain disulfides connect Cys-34-Cys-94, Cys-41-Cys-88, Cys-42-Cys-75, and Cys-95-Cys-108. Residue Asn-35 is glycosylated (N-linked (GlcNAc...) asparagine). The N-linked (GlcNAc...) asparagine glycan is linked to Asn-97.

The protein belongs to the fungal hydrophobin family. As to quaternary structure, self-assembles to form functional amyloid fibrils called rodlets. Self-assembly into fibrillar rodlets occurs spontaneously at hydrophobic:hydrophilic interfaces and the rodlets further associate laterally to form amphipathic monolayers.

It localises to the secreted. It is found in the cell wall. In terms of biological role, aerial growth, conidiation, and dispersal of filamentous fungi in the environment rely upon a capability of their secreting small amphipathic proteins called hydrophobins (HPBs) with low sequence identity. Class I can self-assemble into an outermost layer of rodlet bundles on aerial cell surfaces, conferring cellular hydrophobicity that supports fungal growth, development and dispersal; whereas Class II form highly ordered films at water-air interfaces through intermolecular interactions but contribute nothing to the rodlet structure. Fvh1 is a class I hydrophobin involved in fruiting body initiation. This is Class I hydrophobin fvh1 from Flammulina velutipes (Agaricus velutipes).